Consider the following 382-residue polypeptide: Apolipoprotein A-IV (382 aa).

The N-terminal stretch at methionine 1–alanine 20 is a signal peptide. 13 repeat units span residues aspartate 33–leucine 54, alanine 60–valine 81, proline 82–arginine 103, proline 115–glycine 136, proline 137–threonine 158, serine 159–threonine 180, proline 181–threonine 202, proline 203–alanine 224, proline 225–lysine 246, lysine 247–alanine 268, proline 269–glutamine 286, glutamate 287–glycine 308, and proline 309–glycine 330. The interval aspartate 33–glycine 330 is 13 X 22 AA approximate tandem repeats. Positions glutamate 362–serine 382 are disordered.

It belongs to the apolipoprotein A1/A4/E family. In terms of assembly, homodimer.

The protein resides in the secreted. Functionally, may have a role in chylomicrons and VLDL secretion and catabolism. Required for efficient activation of lipoprotein lipase by ApoC-II; potent activator of LCAT. Apoa-IV is a major component of HDL and chylomicrons. The polypeptide is Apolipoprotein A-IV (APOA4) (Acinonyx jubatus (Cheetah)).